The following is a 734-amino-acid chain: Photosystem I P700 chlorophyll a apoprotein A2 (734 aa).

The next 8 membrane-spanning stretches (helical) occupy residues 46 to 69 (IFASHFGQLAIIFLWTSGNLFHVA), 135 to 158 (LYTGALFLLFLSAISLIAGWLHLQ), 175 to 199 (LNHHLSGLFGVSSLAWTGHLVHVAI), 273 to 291 (IAHHHLAIAFIFLVAGHMY), 330 to 353 (LHFQLGLALASLGVITSLVAQHMY), 369 to 395 (AALYTHHQYIAGFIMTGAFAHGAIFFI), 417 to 439 (AIISHLSWASLFLGFHTLGLYVH), and 517 to 535 (FLVHHAIALGLHTTTLILV). The [4Fe-4S] cluster site is built by C559 and C568. The next 2 helical transmembrane spans lie at 575 to 596 (AFYLAVFWMLNTIGWVTFYWHW) and 643 to 665 (LSVWAWMFLFGHLVWATGFMFLI). The chlorophyll a site is built by H654, M662, and Y670. W671 serves as a coordination point for phylloquinone. Residues 707–727 (LVGLAHFSVGYIFTYAAFLIA) traverse the membrane as a helical segment.

The protein belongs to the PsaA/PsaB family. As to quaternary structure, the PsaA/B heterodimer binds the P700 chlorophyll special pair and subsequent electron acceptors. PSI consists of a core antenna complex that captures photons, and an electron transfer chain that converts photonic excitation into a charge separation. The eukaryotic PSI reaction center is composed of at least 11 subunits. P700 is a chlorophyll a/chlorophyll a' dimer, A0 is one or more chlorophyll a, A1 is one or both phylloquinones and FX is a shared 4Fe-4S iron-sulfur center. is required as a cofactor.

The protein resides in the plastid. The protein localises to the chloroplast thylakoid membrane. It carries out the reaction reduced [plastocyanin] + hnu + oxidized [2Fe-2S]-[ferredoxin] = oxidized [plastocyanin] + reduced [2Fe-2S]-[ferredoxin]. In terms of biological role, psaA and PsaB bind P700, the primary electron donor of photosystem I (PSI), as well as the electron acceptors A0, A1 and FX. PSI is a plastocyanin-ferredoxin oxidoreductase, converting photonic excitation into a charge separation, which transfers an electron from the donor P700 chlorophyll pair to the spectroscopically characterized acceptors A0, A1, FX, FA and FB in turn. Oxidized P700 is reduced on the lumenal side of the thylakoid membrane by plastocyanin. The protein is Photosystem I P700 chlorophyll a apoprotein A2 of Nicotiana tabacum (Common tobacco).